The following is a 278-amino-acid chain: NAD kinase (278 aa).

D56 functions as the Proton acceptor in the catalytic mechanism. Residues 56–57, 132–133, R158, D160, and 171–176 each bind NAD(+); these read DG, NE, and TAYNKS.

Belongs to the NAD kinase family. A divalent metal cation is required as a cofactor.

Its subcellular location is the cytoplasm. It catalyses the reaction NAD(+) + ATP = ADP + NADP(+) + H(+). Involved in the regulation of the intracellular balance of NAD and NADP, and is a key enzyme in the biosynthesis of NADP. Catalyzes specifically the phosphorylation on 2'-hydroxyl of the adenosine moiety of NAD to yield NADP. This chain is NAD kinase, found in Streptococcus agalactiae serotype V (strain ATCC BAA-611 / 2603 V/R).